The following is a 316-amino-acid chain: MLKRNKVVLVGAGGVGSSFAYALTIDNSLVHELVIIDVAQDKAKGEVMDLNHGQMFLEKNIKIAFGNYDDCSDADIVVITAGLNQKPGETRLDLVGKNTKIFKEIVTGVVSSGFNGIFVIASNPVDIMTYVTMKYSNFPTHKVIGTGTTLDTSRLRYFLAERFNVNTQNIHSYIMGEHGDSSFATWDETKIAMKSLSEYIAEGTIREVELDEIHKKVVNAAYEVIKLKGATYYAIGLGIKKIVNAIISDQNLILPISSYINGQYGNFIKDIYIGAPAVVCKEGVKEVLDFKISDRELEKFKISANQLKSYIDKIEF.

Residues Val15, Asp37, Lys42, Tyr68, and 82-83 (GL) contribute to the NAD(+) site. Substrate-binding positions include Gln85, Arg91, and 123–126 (NPVD). Residues 121 to 123 (ASN) and Thr146 contribute to the NAD(+) site. Position 151–154 (151–154 (DTSR)) interacts with substrate. Residues Arg156 and His171 each contribute to the beta-D-fructose 1,6-bisphosphate site. His178 (proton acceptor) is an active-site residue. Tyr222 is modified (phosphotyrosine). Thr231 is a substrate binding site.

It belongs to the LDH/MDH superfamily. LDH family. As to quaternary structure, homotetramer.

The protein resides in the cytoplasm. The enzyme catalyses (S)-lactate + NAD(+) = pyruvate + NADH + H(+). The protein operates within fermentation; pyruvate fermentation to lactate; (S)-lactate from pyruvate: step 1/1. Allosterically activated by fructose 1,6-bisphosphate (FBP). Catalyzes the conversion of lactate to pyruvate. The protein is L-lactate dehydrogenase of Borrelia hermsii (strain HS1 / DAH).